The chain runs to 81 residues: High-potential iron-sulfur protein (81 aa).

Residues Cys43, Cys46, Cys59, and Cys73 each contribute to the [4Fe-4S] cluster site.

The protein belongs to the high-potential iron-sulfur protein (HiPIP) family. In terms of assembly, homodimer.

Its function is as follows. Specific class of high-redox-potential 4Fe-4S ferredoxins. Functions in anaerobic electron transport in most purple and in some other photosynthetic bacteria and in at least one genus (Paracoccus) of halophilic, denitrifying bacteria. The protein is High-potential iron-sulfur protein (hip) of Thiococcus pfennigii (Thiocapsa pfennigii).